The sequence spans 98 residues: MPLLRKYEIMILLTEEFNDSELKTWVFNYAKNLRKFSVCDISVISRGKHNLAYPIETKMKGNYIQLNFSSMPKYITNFSKTLKMDSNVLRFLVFNKQL.

It belongs to the bacterial ribosomal protein bS6 family.

It is found in the plastid. Its subcellular location is the chloroplast. Functionally, binds together with bS18 to 16S ribosomal RNA. This chain is Small ribosomal subunit protein bS6c, found in Phaeodactylum tricornutum (strain CCAP 1055/1).